Consider the following 191-residue polypeptide: Molybdenum cofactor guanylyltransferase (191 aa).

GTP-binding positions include 13–15 (LAG), Lys-26, Asp-72, and Asp-102. Residue Asp-102 coordinates Mg(2+).

This sequence belongs to the MobA family. In terms of assembly, monomer. Requires Mg(2+) as cofactor.

It localises to the cytoplasm. It carries out the reaction Mo-molybdopterin + GTP + H(+) = Mo-molybdopterin guanine dinucleotide + diphosphate. Its function is as follows. Transfers a GMP moiety from GTP to Mo-molybdopterin (Mo-MPT) cofactor (Moco or molybdenum cofactor) to form Mo-molybdopterin guanine dinucleotide (Mo-MGD) cofactor. The polypeptide is Molybdenum cofactor guanylyltransferase (Pseudomonas entomophila (strain L48)).